A 241-amino-acid polypeptide reads, in one-letter code: DNA repair protein RecO (241 aa).

This sequence belongs to the RecO family.

Its function is as follows. Involved in DNA repair and RecF pathway recombination. This Orientia tsutsugamushi (strain Boryong) (Rickettsia tsutsugamushi) protein is DNA repair protein RecO.